The primary structure comprises 221 residues: 7-cyano-7-deazaguanine synthase (221 aa).

10 to 20 contacts ATP; it reads FSGGQDSTTCL. Zn(2+) contacts are provided by Cys-186, Cys-195, Cys-198, and Cys-201.

It belongs to the QueC family. As to quaternary structure, homodimer. Zn(2+) is required as a cofactor.

The catalysed reaction is 7-carboxy-7-deazaguanine + NH4(+) + ATP = 7-cyano-7-deazaguanine + ADP + phosphate + H2O + H(+). Its pathway is purine metabolism; 7-cyano-7-deazaguanine biosynthesis. Functionally, catalyzes the ATP-dependent conversion of 7-carboxy-7-deazaguanine (CDG) to 7-cyano-7-deazaguanine (preQ(0)). The protein is 7-cyano-7-deazaguanine synthase of Geobacillus kaustophilus (strain HTA426).